Reading from the N-terminus, the 532-residue chain is Phosphoenolpyruvate carboxykinase (ATP) (532 aa).

3 residues coordinate substrate: Arg60, Tyr195, and Lys201. Residues Lys201, His221, and 237–245 contribute to the ATP site; that span reads GLSGTGKTT. The Mn(2+) site is built by Lys201 and His221. Asp258 is a Mn(2+) binding site. ATP-binding residues include Glu287, Arg323, and Thr448. Arg323 is a substrate binding site.

The protein belongs to the phosphoenolpyruvate carboxykinase (ATP) family. It depends on Mn(2+) as a cofactor.

Its subcellular location is the cytoplasm. It catalyses the reaction oxaloacetate + ATP = phosphoenolpyruvate + ADP + CO2. Its pathway is carbohydrate biosynthesis; gluconeogenesis. In terms of biological role, involved in the gluconeogenesis. Catalyzes the conversion of oxaloacetate (OAA) to phosphoenolpyruvate (PEP) through direct phosphoryl transfer between the nucleoside triphosphate and OAA. This chain is Phosphoenolpyruvate carboxykinase (ATP), found in Christiangramia forsetii (strain DSM 17595 / CGMCC 1.15422 / KT0803) (Gramella forsetii).